Consider the following 548-residue polypeptide: Membrane protein insertase YidC (548 aa).

The chain crosses the membrane as a helical span at residues 6–26; it reads NLLVIALLFVSFMIWQAWEQD. The segment at 28-56 is disordered; it reads NPQPQTQQTTQTTTTAAGSAADQGVPASG. Low complexity predominate over residues 29-42; the sequence is PQPQTQQTTQTTTT. 4 consecutive transmembrane segments (helical) span residues 350 to 370, 424 to 444, 458 to 478, and 499 to 519; these read FVGNWGFSIIIITFIVRGIMY, FPLIIQMPIFLALYYMLMGSI, LSAQDPYYILPILMGVTMFFI, and PVIFTVFFLWFPSGLVLYYIV.

This sequence belongs to the OXA1/ALB3/YidC family. Type 1 subfamily. Interacts with the Sec translocase complex via SecD. Specifically interacts with transmembrane segments of nascent integral membrane proteins during membrane integration.

It localises to the cell inner membrane. Required for the insertion and/or proper folding and/or complex formation of integral membrane proteins into the membrane. Involved in integration of membrane proteins that insert both dependently and independently of the Sec translocase complex, as well as at least some lipoproteins. Aids folding of multispanning membrane proteins. The chain is Membrane protein insertase YidC from Salmonella paratyphi C (strain RKS4594).